We begin with the raw amino-acid sequence, 178 residues long: FANCD2 opposite strand protein (178 aa).

In Mus musculus (Mouse), this protein is FANCD2 opposite strand protein (Fancd2os).